Here is a 76-residue protein sequence, read N- to C-terminus: Amyloid protein A (76 aa).

Belongs to the SAA family. In terms of tissue distribution, expressed by the liver; secreted in plasma.

It localises to the secreted. In terms of biological role, major acute phase reactant. Apolipoprotein of the HDL complex. The polypeptide is Amyloid protein A (SAA1) (Macaca mulatta (Rhesus macaque)).